A 317-amino-acid polypeptide reads, in one-letter code: Beta-ketoacyl-[acyl-carrier-protein] synthase III (317 aa).

Active-site residues include Cys112 and His244. Residues 245–249 (QANLR) form an ACP-binding region. Asn274 is an active-site residue.

This sequence belongs to the thiolase-like superfamily. FabH family. Homodimer.

The protein localises to the cytoplasm. The catalysed reaction is malonyl-[ACP] + acetyl-CoA + H(+) = 3-oxobutanoyl-[ACP] + CO2 + CoA. The protein operates within lipid metabolism; fatty acid biosynthesis. In terms of biological role, catalyzes the condensation reaction of fatty acid synthesis by the addition to an acyl acceptor of two carbons from malonyl-ACP. Catalyzes the first condensation reaction which initiates fatty acid synthesis and may therefore play a role in governing the total rate of fatty acid production. Possesses both acetoacetyl-ACP synthase and acetyl transacylase activities. Its substrate specificity determines the biosynthesis of branched-chain and/or straight-chain of fatty acids. The sequence is that of Beta-ketoacyl-[acyl-carrier-protein] synthase III from Sodalis glossinidius (strain morsitans).